The chain runs to 476 residues: Eukaryotic translation initiation factor 3 subunit L (476 aa).

Positions Asp-257 to Leu-452 constitute a PCI domain.

This sequence belongs to the eIF-3 subunit L family. In terms of assembly, component of the eukaryotic translation initiation factor 3 (eIF-3) complex.

The protein localises to the cytoplasm. Functionally, component of the eukaryotic translation initiation factor 3 (eIF-3) complex, which is involved in protein synthesis of a specialized repertoire of mRNAs and, together with other initiation factors, stimulates binding of mRNA and methionyl-tRNAi to the 40S ribosome. The eIF-3 complex specifically targets and initiates translation of a subset of mRNAs involved in cell proliferation. The sequence is that of Eukaryotic translation initiation factor 3 subunit L from Aspergillus niger (strain ATCC MYA-4892 / CBS 513.88 / FGSC A1513).